Reading from the N-terminus, the 193-residue chain is Molybdopterin synthase catalytic subunit (193 aa).

Substrate contacts are provided by residues 118–119, lysine 134, and 141–143; these read HR and KKE. The segment at 159–193 is disordered; it reads DRTTTDGTTASSPAPATRPAKGGGCCGSKVRANES. Low complexity predominate over residues 163–178; it reads TDGTTASSPAPATRPA.

This sequence belongs to the MoaE family. MOCS2B subfamily. In terms of assembly, heterotetramer; composed of 2 small (MOCS2A) and 2 large (MOCS2B) subunits.

The protein resides in the cytoplasm. The catalysed reaction is 2 [molybdopterin-synthase sulfur-carrier protein]-C-terminal-Gly-aminoethanethioate + cyclic pyranopterin phosphate + H2O = molybdopterin + 2 [molybdopterin-synthase sulfur-carrier protein]-C-terminal Gly-Gly + 2 H(+). The protein operates within cofactor biosynthesis; molybdopterin biosynthesis. Its function is as follows. Catalytic subunit of the molybdopterin synthase complex, a complex that catalyzes the conversion of precursor Z into molybdopterin. Acts by mediating the incorporation of 2 sulfur atoms from thiocarboxylated MOCS2A into precursor Z to generate a dithiolene group. In Oryza sativa subsp. indica (Rice), this protein is Molybdopterin synthase catalytic subunit.